Here is a 202-residue protein sequence, read N- to C-terminus: Protein GrpE 1 (202 aa).

Belongs to the GrpE family. In terms of assembly, homodimer.

Its subcellular location is the cytoplasm. Functionally, participates actively in the response to hyperosmotic and heat shock by preventing the aggregation of stress-denatured proteins, in association with DnaK and GrpE. It is the nucleotide exchange factor for DnaK and may function as a thermosensor. Unfolded proteins bind initially to DnaJ; upon interaction with the DnaJ-bound protein, DnaK hydrolyzes its bound ATP, resulting in the formation of a stable complex. GrpE releases ADP from DnaK; ATP binding to DnaK triggers the release of the substrate protein, thus completing the reaction cycle. Several rounds of ATP-dependent interactions between DnaJ, DnaK and GrpE are required for fully efficient folding. In Buchnera aphidicola subsp. Schizaphis graminum (strain Sg), this protein is Protein GrpE 1.